The chain runs to 455 residues: Bifunctional protein GlmU (455 aa).

The segment at 1–229 is pyrophosphorylase; sequence MSKKVMSVVI…LNEIEGINDG (229 aa). UDP-N-acetyl-alpha-D-glucosamine contacts are provided by residues 11–14, lysine 25, glutamine 76, 81–82, 103–105, glycine 140, glutamate 154, asparagine 169, and asparagine 227; these read LAAG, GT, and YGD. Aspartate 105 lines the Mg(2+) pocket. Residue asparagine 227 participates in Mg(2+) binding. A linker region spans residues 230-250; it reads LQLARLERLFQKQQAEKLLLS. Residues 251–455 are N-acetyltransferase; sequence GVRILDPARF…IQGWKRPKKT (205 aa). Arginine 333 and lysine 351 together coordinate UDP-N-acetyl-alpha-D-glucosamine. Histidine 363 acts as the Proton acceptor in catalysis. 2 residues coordinate UDP-N-acetyl-alpha-D-glucosamine: tyrosine 366 and asparagine 377. Acetyl-CoA-binding positions include alanine 380, 386–387, serine 405, alanine 423, and arginine 440; that span reads NY.

This sequence in the N-terminal section; belongs to the N-acetylglucosamine-1-phosphate uridyltransferase family. In the C-terminal section; belongs to the transferase hexapeptide repeat family. Homotrimer. Mg(2+) is required as a cofactor.

The protein resides in the cytoplasm. The enzyme catalyses alpha-D-glucosamine 1-phosphate + acetyl-CoA = N-acetyl-alpha-D-glucosamine 1-phosphate + CoA + H(+). It carries out the reaction N-acetyl-alpha-D-glucosamine 1-phosphate + UTP + H(+) = UDP-N-acetyl-alpha-D-glucosamine + diphosphate. It participates in nucleotide-sugar biosynthesis; UDP-N-acetyl-alpha-D-glucosamine biosynthesis; N-acetyl-alpha-D-glucosamine 1-phosphate from alpha-D-glucosamine 6-phosphate (route II): step 2/2. It functions in the pathway nucleotide-sugar biosynthesis; UDP-N-acetyl-alpha-D-glucosamine biosynthesis; UDP-N-acetyl-alpha-D-glucosamine from N-acetyl-alpha-D-glucosamine 1-phosphate: step 1/1. The protein operates within bacterial outer membrane biogenesis; LPS lipid A biosynthesis. Its function is as follows. Catalyzes the last two sequential reactions in the de novo biosynthetic pathway for UDP-N-acetylglucosamine (UDP-GlcNAc). The C-terminal domain catalyzes the transfer of acetyl group from acetyl coenzyme A to glucosamine-1-phosphate (GlcN-1-P) to produce N-acetylglucosamine-1-phosphate (GlcNAc-1-P), which is converted into UDP-GlcNAc by the transfer of uridine 5-monophosphate (from uridine 5-triphosphate), a reaction catalyzed by the N-terminal domain. This chain is Bifunctional protein GlmU, found in Hamiltonella defensa subsp. Acyrthosiphon pisum (strain 5AT).